The chain runs to 275 residues: Large ribosomal subunit protein uL2cz/uL2cy (275 aa).

Disordered stretches follow at residues 1–26 (MAIH…VKSN) and 224–275 (MNPV…RRTK). Over residues 7 to 26 (KTSTPSTRNGTVDSRQVKSN) the composition is skewed to polar residues.

Belongs to the universal ribosomal protein uL2 family. In terms of assembly, part of the 50S ribosomal subunit.

Its subcellular location is the plastid. It localises to the chloroplast. This Phaseolus angularis (Azuki bean) protein is Large ribosomal subunit protein uL2cz/uL2cy (rpl2-A).